The sequence spans 294 residues: Acetyl-coenzyme A carboxylase carboxyl transferase subunit beta (294 aa).

Residues L29–A294 enclose the CoA carboxyltransferase N-terminal domain. Zn(2+) is bound by residues C33, C36, C52, and C55. Residues C33–C55 form a C4-type zinc finger.

The protein belongs to the AccD/PCCB family. As to quaternary structure, acetyl-CoA carboxylase is a heterohexamer composed of biotin carboxyl carrier protein (AccB), biotin carboxylase (AccC) and two subunits each of ACCase subunit alpha (AccA) and ACCase subunit beta (AccD). Requires Zn(2+) as cofactor.

Its subcellular location is the cytoplasm. It carries out the reaction N(6)-carboxybiotinyl-L-lysyl-[protein] + acetyl-CoA = N(6)-biotinyl-L-lysyl-[protein] + malonyl-CoA. The protein operates within lipid metabolism; malonyl-CoA biosynthesis; malonyl-CoA from acetyl-CoA: step 1/1. In terms of biological role, component of the acetyl coenzyme A carboxylase (ACC) complex. Biotin carboxylase (BC) catalyzes the carboxylation of biotin on its carrier protein (BCCP) and then the CO(2) group is transferred by the transcarboxylase to acetyl-CoA to form malonyl-CoA. The chain is Acetyl-coenzyme A carboxylase carboxyl transferase subunit beta from Prochlorococcus marinus (strain NATL2A).